Reading from the N-terminus, the 433-residue chain is Agnestins efflux protein AgnL12 (433 aa).

Polar residues-rich tracts occupy residues 1–10 (MSRSTSTELQ) and 25–40 (SIAS…PPST). Positions 1-40 (MSRSTSTELQQELPASKEVPPDPTSIASSETASGSKPPST) are disordered. 12 consecutive transmembrane segments (helical) span residues 47–67 (ILVL…TNAF), 87–107 (ISWI…ISGY), 116–136 (LLIC…SLST), 141–161 (IFLT…LPAM), 174–194 (LAMG…PIAL), 205–225 (WTVR…CLAI), 248–268 (VMIF…SPFF), 285–305 (FYMV…PGLI), 309–329 (VGNY…ACCW), 335–355 (VGGI…VISL), 370–390 (GVAM…GTPI), and 401–421 (LGLS…ILLA).

It belongs to the major facilitator superfamily. Monocarboxylate porter (TC 2.A.1.13) family.

It is found in the cell membrane. In terms of biological role, efflux pump that may be involved in the secretion of agnestins, dihydroxy-xanthone metabolites. The polypeptide is Agnestins efflux protein AgnL12 (Paecilomyces divaricatus (Penicillium divaricatum)).